The following is an 853-amino-acid chain: Penicillin-binding protein 1A (853 aa).

The Cytoplasmic segment spans residues 1 to 6 (MRIAKL). A helical; Signal-anchor for type II membrane protein membrane pass occupies residues 7-27 (ILNTLLTLCILGLVAGGMLYF). Residues 28 to 853 (HLKSELQQPM…TPATQPQELF (826 aa)) are Periplasmic-facing. The transglycosylase stretch occupies residues 37 to 205 (MQIYTADGKL…STMNPLYSLK (169 aa)). The active-site Proton donor; for transglycosylase activity is E75. The transpeptidase stretch occupies residues 387 to 681 (QRANGEWQLG…RVISGELAFL (295 aa)). The Acyl-ester intermediate; for transpeptidase activity role is filled by S441. The interval 615–636 (NALKPTDDSTNGEELDQQPETV) is disordered.

It in the N-terminal section; belongs to the glycosyltransferase 51 family. In the C-terminal section; belongs to the transpeptidase family.

The protein localises to the cell inner membrane. The enzyme catalyses [GlcNAc-(1-&gt;4)-Mur2Ac(oyl-L-Ala-gamma-D-Glu-L-Lys-D-Ala-D-Ala)](n)-di-trans,octa-cis-undecaprenyl diphosphate + beta-D-GlcNAc-(1-&gt;4)-Mur2Ac(oyl-L-Ala-gamma-D-Glu-L-Lys-D-Ala-D-Ala)-di-trans,octa-cis-undecaprenyl diphosphate = [GlcNAc-(1-&gt;4)-Mur2Ac(oyl-L-Ala-gamma-D-Glu-L-Lys-D-Ala-D-Ala)](n+1)-di-trans,octa-cis-undecaprenyl diphosphate + di-trans,octa-cis-undecaprenyl diphosphate + H(+). The catalysed reaction is Preferential cleavage: (Ac)2-L-Lys-D-Ala-|-D-Ala. Also transpeptidation of peptidyl-alanyl moieties that are N-acyl substituents of D-alanine.. The protein operates within cell wall biogenesis; peptidoglycan biosynthesis. Cell wall formation. Synthesis of cross-linked peptidoglycan from the lipid intermediates. The enzyme has a penicillin-insensitive transglycosylase N-terminal domain (formation of linear glycan strands) and a penicillin-sensitive transpeptidase C-terminal domain (cross-linking of the peptide subunits). The polypeptide is Penicillin-binding protein 1A (mrcA) (Haemophilus influenzae (strain ATCC 51907 / DSM 11121 / KW20 / Rd)).